The primary structure comprises 619 residues: TOX high mobility group box family member 4 (619 aa).

Disordered stretches follow at residues 155–227 (LSLG…QKPV), 304–335 (ELDPVPQSQTPSPPPVTTADPASPAPASTESP), and 436–458 (LPPPRLQPPPLQQMPQPPTQQQV). Thr-176 is modified (phosphothreonine). A phosphoserine mark is found at Ser-178 and Ser-182. The span at 183–193 (LHEDGVDDFRR) shows a compositional bias: basic and acidic residues. Basic residues predominate over residues 208–218 (KQKAPKKRKKK). Residues 213-218 (KKRKKK) carry the Nuclear localization signal motif. The segment at residues 223-291 (PQKPVSAYAL…EYLKALAAYK (69 aa)) is a DNA-binding region (HMG box). Thr-313 is modified (phosphothreonine). Ser-315 is subject to Phosphoserine. Over residues 320–335 (TTADPASPAPASTESP) the composition is skewed to low complexity. The segment covering 436–453 (LPPPRLQPPPLQQMPQPP) has biased composition (pro residues). Residue Arg-479 is modified to Asymmetric dimethylarginine. Ser-531, Ser-548, Ser-550, Ser-558, Ser-560, and Ser-565 each carry phosphoserine.

As to quaternary structure, component of the PNUTS-PP1 phosphatase complex, composed of PPP1R10/PNUTS, TOX4, WDR82 and PPP1CA or PPP1CB or PPP1CC. Interacts with PPP1R10/PNUTS. Interacts with FOXO1 and CREB1 (increased by cAMP); FOXO1 and CREB1 are required for full induction of TOX4-dependent activity and the interactions are inhibited by insulin.

It is found in the nucleus. The protein localises to the chromosome. Its activity is regulated as follows. In liver, recruited to target gene promoters following treatment with dexamethasone and cAMP. Binding is decreased in presence of insulin. Transcription factor that modulates cell fate reprogramming from the somatic state to the pluripotent and neuronal fate. In liver, controls the expression of hormone-regulated gluconeogenic genes such as G6PC1 and PCK1. This regulation is independent of the insulin receptor activation. Also acts as a regulatory component of protein phosphatase 1 (PP1) complexes. Component of the PNUTS-PP1 protein phosphatase complex, a PP1 complex that regulates RNA polymerase II transcription pause-release. PNUTS-PP1 also plays a role in the control of chromatin structure and cell cycle progression during the transition from mitosis into interphase. The sequence is that of TOX high mobility group box family member 4 (Tox4) from Rattus norvegicus (Rat).